The primary structure comprises 519 residues: General transcription factor 3C polypeptide 5 (519 aa).

A2 carries the post-translational modification N-acetylalanine. The segment at 465–519 (ALFSSSAKADGGKEQLTYESGEDEEDEEEEEEEEEDFKPSDGSENEMETEILDYV) is disordered. Acidic residues-rich tracts occupy residues 484 to 500 (SGED…EEED) and 507 to 519 (SENE…LDYV).

It belongs to the TFIIIC subunit 5 family. As to quaternary structure, part of the TFIIIC subcomplex TFIIIC2, consisting of six subunits, GTF3C1, GTF3C2, GTF3C3, GTF3C4, GTF3C5 and GTF3C6. Interacts with BRF1, GTF3C6 and TBP.

Its subcellular location is the nucleus. Involved in RNA polymerase III-mediated transcription. Integral, tightly associated component of the DNA-binding TFIIIC2 subcomplex that directly binds tRNA and virus-associated RNA promoters. This chain is General transcription factor 3C polypeptide 5 (GTF3C5), found in Homo sapiens (Human).